The primary structure comprises 332 residues: Glucokinase (332 aa).

Ala-15–Thr-20 provides a ligand contact to ATP.

The protein belongs to the bacterial glucokinase family.

It localises to the cytoplasm. It carries out the reaction D-glucose + ATP = D-glucose 6-phosphate + ADP + H(+). The chain is Glucokinase from Campylobacter jejuni subsp. doylei (strain ATCC BAA-1458 / RM4099 / 269.97).